Here is a 180-residue protein sequence, read N- to C-terminus: MASSSPILLMIIFSMWLLISHSESTDYLIGDSHNSWKVPLPSRRAFARWASAHEFTVGDTILFEYDNETESVHEVNEHDYIMCHTNGEHVEHHDGNTKVVLDKIGVYHFISGTKRHCKMGLKLAVVVQNKHDLVLPPLITMPMPPSPSPSPNSSGNKGGAAGLGFIMWLGVSLVMMMFLI.

A signal peptide spans 1-22 (MASSSPILLMIIFSMWLLISHS). A Phytocyanin domain is found at 25–129 (TDYLIGDSHN…GLKLAVVVQN (105 aa)). N-linked (GlcNAc...) asparagine glycosylation occurs at asparagine 67. Residues cysteine 83 and cysteine 117 are joined by a disulfide bond. N-linked (GlcNAc...) asparagine glycosylation is present at asparagine 152. A lipid anchor (GPI-anchor amidated serine) is attached at serine 154. A propeptide spans 155–180 (GNKGGAAGLGFIMWLGVSLVMMMFLI) (removed in mature form).

The protein belongs to the early nodulin-like (ENODL) family. As to expression, expressed in developing nodules upon symbiosis with Sinorhizobium meliloti.

Its subcellular location is the symbiosome. It is found in the cell membrane. May act as a carbohydrate transporter. The protein is Early nodulin-16 of Medicago truncatula (Barrel medic).